We begin with the raw amino-acid sequence, 235 residues long: 2,3,4,5-tetrahydropyridine-2,6-dicarboxylate N-acetyltransferase (235 aa).

This sequence belongs to the transferase hexapeptide repeat family. DapH subfamily.

It carries out the reaction (S)-2,3,4,5-tetrahydrodipicolinate + acetyl-CoA + H2O = L-2-acetamido-6-oxoheptanedioate + CoA. The protein operates within amino-acid biosynthesis; L-lysine biosynthesis via DAP pathway; LL-2,6-diaminopimelate from (S)-tetrahydrodipicolinate (acetylase route): step 1/3. In terms of biological role, catalyzes the transfer of an acetyl group from acetyl-CoA to tetrahydrodipicolinate. The polypeptide is 2,3,4,5-tetrahydropyridine-2,6-dicarboxylate N-acetyltransferase (Exiguobacterium sibiricum (strain DSM 17290 / CCUG 55495 / CIP 109462 / JCM 13490 / 255-15)).